Here is a 375-residue protein sequence, read N- to C-terminus: Ornithine transcarbamylase, chloroplastic (375 aa).

A chloroplast-targeting transit peptide spans 1–53 (MAAAMASHVSTARSPALSFSSSSSSFFPGTTLRRFSAVSLPSPALPRLRVSCQ). Ala54 is modified (N-acetylalanine). Residues 123-126 (SMRT), Arg174, His201, and Gln204 contribute to the carbamoyl phosphate site. L-ornithine is bound by residues Asn232, Asp293, Ser297, and Met298. Cys333 serves as the catalytic Proton acceptor. Carbamoyl phosphate is bound by residues 333–334 (CL) and Arg361.

Belongs to the aspartate/ornithine carbamoyltransferase superfamily. OTCase family.

Its subcellular location is the plastid. It is found in the chloroplast. It catalyses the reaction carbamoyl phosphate + L-ornithine = L-citrulline + phosphate + H(+). The sequence is that of Ornithine transcarbamylase, chloroplastic (OTC) from Arabidopsis thaliana (Mouse-ear cress).